A 128-amino-acid chain; its full sequence is Large ribosomal subunit protein eL22 (128 aa).

Threonine 62 bears the Phosphothreonine mark. Serine 66 is modified (phosphoserine). An N6-succinyllysine modification is found at lysine 69.

Belongs to the eukaryotic ribosomal protein eL22 family. In terms of assembly, component of the large ribosomal subunit.

The protein localises to the cytoplasm. Component of the large ribosomal subunit. The ribosome is a large ribonucleoprotein complex responsible for the synthesis of proteins in the cell. This Oryctolagus cuniculus (Rabbit) protein is Large ribosomal subunit protein eL22 (RPL22).